We begin with the raw amino-acid sequence, 277 residues long: Putative phosphoenolpyruvate synthase regulatory protein (277 aa).

ADP is bound at residue 157–164; it reads GVSRSGKT.

Belongs to the pyruvate, phosphate/water dikinase regulatory protein family. PSRP subfamily.

It catalyses the reaction [pyruvate, water dikinase] + ADP = [pyruvate, water dikinase]-phosphate + AMP + H(+). The catalysed reaction is [pyruvate, water dikinase]-phosphate + phosphate + H(+) = [pyruvate, water dikinase] + diphosphate. In terms of biological role, bifunctional serine/threonine kinase and phosphorylase involved in the regulation of the phosphoenolpyruvate synthase (PEPS) by catalyzing its phosphorylation/dephosphorylation. This is Putative phosphoenolpyruvate synthase regulatory protein from Vibrio vulnificus (strain CMCP6).